A 43-amino-acid polypeptide reads, in one-letter code: Protein PsbN (43 aa).

The helical transmembrane segment at 7–27 (LIVFIASLLLGVTGYSVYTAF) threads the bilayer.

It belongs to the PsbN family.

The protein localises to the plastid. Its subcellular location is the chloroplast thylakoid membrane. In terms of biological role, may play a role in photosystem I and II biogenesis. The polypeptide is Protein PsbN (Rhodomonas salina (Cryptomonas salina)).